Here is a 77-residue protein sequence, read N- to C-terminus: Large ribosomal subunit protein bL28 (77 aa).

It belongs to the bacterial ribosomal protein bL28 family.

The chain is Large ribosomal subunit protein bL28 from Polynucleobacter necessarius subsp. necessarius (strain STIR1).